Here is a 301-residue protein sequence, read N- to C-terminus: uncharacterized protein (301 aa).

Positions 27–85 constitute an FHA domain; that stretch reads YKIGRHTNKSTSPSPSNLFFNSKVLSRQHAELWLDKDTLSVYIRDVKSSNGTFVNETRL. Residues 187-236 form a disordered region; sequence TGKTRDNRNNHHYSRKSSPHISSLAVPSTKHLDGERDRNLKRSTSPLSSS. Phosphoserine is present on Ser204. Residues 216–226 are compositionally biased toward basic and acidic residues; sequence KHLDGERDRNL. Ser231 carries the phosphoserine modification.

As to quaternary structure, interacts with sad1.

Its subcellular location is the nucleus. This is an uncharacterized protein from Schizosaccharomyces pombe (strain 972 / ATCC 24843) (Fission yeast).